A 461-amino-acid chain; its full sequence is Cytochrome c biogenesis protein CcsB (461 aa).

3 helical membrane passes run 32–52, 91–111, and 178–198; these read LRLAIALLLIIALFSISGTVI, TWWFLSLLVLFGTSLTACTFT, and IGPIIVHIGIVTILLGSIWGA.

Belongs to the Ccs1/CcsB family. In terms of assembly, may interact with CcsA.

Its subcellular location is the cellular thylakoid membrane. Functionally, required during biogenesis of c-type cytochromes (cytochrome c6 and cytochrome f) at the step of heme attachment. The sequence is that of Cytochrome c biogenesis protein CcsB from Trichormus variabilis (strain ATCC 29413 / PCC 7937) (Anabaena variabilis).